A 338-amino-acid polypeptide reads, in one-letter code: Egl nine homolog 1 (338 aa).

Residues 1–11 (PRAQPAPAQPR) are compositionally biased toward low complexity. The tract at residues 1 to 99 (PRAQPAPAQP…PSGGLRPNGQ (99 aa)) is disordered. Position 52 is a phosphoserine (S52). S-nitrosocysteine occurs at positions 116 and 123. The beta(2)beta(3) 'finger-like' loop stretch occupies residues 156–166 (VSQKSDSSKDI). The Fe2OG dioxygenase domain maps to 209 to 307 (GRTKAMVACY…RYAITVWYFD (99 aa)). An S-nitrosocysteine modification is found at C217. 2 residues coordinate Fe cation: H228 and D230. An S-nitrosocysteine mark is found at C238 and C241. H289 serves as a coordination point for Fe cation. R298 is a 2-oxoglutarate binding site.

Monomer. Interacts with ING4; the interaction inhibits the hydroxylation of HIF alpha proteins. Interacts with PTGES3 (via PXLE motif); thereby recruiting EGLN1 to the HSP90 pathway to facilitate HIF alpha proteins hydroxylation. Interacts with LIMD1. Found in a complex composed of LIMD1, VHL, EGLN1/PHD2, ELOB and CUL2. Interacts with EPAS1. Interacts with CBFA2T3 and HIF1A. Requires Fe(2+) as cofactor. It depends on L-ascorbate as a cofactor. In terms of processing, S-nitrosylation inhibits the enzyme activity up to 60% under aerobic conditions. Chelation of Fe(2+) has no effect on the S-nitrosylation. It is uncertain whether nitrosylation occurs on Cys-238 or Cys-241. In terms of tissue distribution, expressed in heart, liver, kidney, brain, liver and testis. Highest levels in heart, lowest in liver.

It localises to the cytoplasm. Its subcellular location is the nucleus. The catalysed reaction is L-prolyl-[hypoxia-inducible factor alpha subunit] + 2-oxoglutarate + O2 = trans-4-hydroxy-L-prolyl-[hypoxia-inducible factor alpha subunit] + succinate + CO2. Its activity is regulated as follows. Increased activation in hypoxia. Hydroxylation of the C-terminal ODD domain (CODD) proline of HIF1A is activated by cyclosporin A (CsA). Its function is as follows. Cellular oxygen sensor that catalyzes, under normoxic conditions, the post-translational formation of 4-hydroxyproline in hypoxia-inducible factor (HIF) alpha proteins. Hydroxylates a specific proline found in each of the oxygen-dependent degradation (ODD) domains (N-terminal, NODD, and C-terminal, CODD) of HIF1A. Also hydroxylates HIF2A. Has a preference for the CODD site for both HIF1A and HIF1B. Hydroxylated HIFs are then targeted for proteasomal degradation via the von Hippel-Lindau ubiquitination complex. Under hypoxic conditions, the hydroxylation reaction is attenuated allowing HIFs to escape degradation resulting in their translocation to the nucleus, heterodimerization with HIF1B, and increased expression of hypoxy-inducible genes. EGLN1 is the most important isozyme under normoxia and, through regulating the stability of HIF1, involved in various hypoxia-influenced processes such as angiogenesis in retinal and cardiac functionality. Target proteins are preferentially recognized via a LXXLAP motif. This chain is Egl nine homolog 1 (Egln1), found in Rattus norvegicus (Rat).